The primary structure comprises 216 residues: Elongation factor Ts (216 aa).

The involved in Mg(2+) ion dislocation from EF-Tu stretch occupies residues 81–84 (TDFV).

It belongs to the EF-Ts family.

The protein resides in the cytoplasm. Associates with the EF-Tu.GDP complex and induces the exchange of GDP to GTP. It remains bound to the aminoacyl-tRNA.EF-Tu.GTP complex up to the GTP hydrolysis stage on the ribosome. This chain is Elongation factor Ts, found in Geotalea daltonii (strain DSM 22248 / JCM 15807 / FRC-32) (Geobacter daltonii).